The chain runs to 1661 residues: Microtubule cross-linking factor 2 (1661 aa).

A disordered region spans residues 1-187 (MEAPAAEPPV…EPSVAASSVG (187 aa)). Low complexity-rich tracts occupy residues 76–94 (AVAP…VRTG) and 133–149 (LLGL…SAAG). The span at 167-176 (QQPPRPPASP) shows a compositional bias: pro residues. Residues 211–240 (PSGLVRELEELRSENDYLKDEIEELRAEML) form a required for association with Golgi apparatus membrane region. Coiled-coil stretches lie at residues 218–281 (LEEL…AERR) and 310–351 (SMRL…LQTE). The interval 353–373 (ERPREHSLKKRGTRSLGKADK) is disordered. Coiled-coil stretches lie at residues 450–484 (LKLV…MKDH), 820–865 (IKEL…LKED), and 1083–1117 (SQEK…LQKA). Ser1169 carries the post-translational modification Phosphoserine. A disordered region spans residues 1196–1221 (AFGFVSSEPGDPEKDTKEKPGLSSRD). A compositionally biased stretch (basic and acidic residues) spans 1206-1215 (DPEKDTKEKP). Ser1255 carries the phosphoserine modification. 3 disordered regions span residues 1432–1456 (RPCC…DSSK), 1538–1563 (RAPS…ASYH), and 1636–1661 (HSPS…PPSE). Residues 1652–1661 (GEERALPPSE) show a composition bias toward basic and acidic residues.

The protein belongs to the MTCL family. Interacts with CLASP1 and CLASP2. The C-terminal 25 kDa form occurs as a monomer. Post-translationally, proteolytically cleaved in primary hepatocytes into a C-terminal 80 kDa form. Proteolytically cleaved into a C-terminal SOGA 25 kDa form that is detected in plasma. Phosphorylated during mitosis in a CDK1-dependent manner.

It is found in the cytoplasm. The protein resides in the cytoskeleton. It localises to the golgi apparatus membrane. The protein localises to the midbody. Its subcellular location is the secreted. Microtubule-associated factor that enables integration of the centrosomal and Golgi-associated microtubules on the Golgi membrane, supporting directional migration. Preferentially acts on the perinuclear microtubules accumulated around the Golgi. Associates with the Golgi membrane through the N-terminal coiled-coil region and directly binds microtubules through the C-terminal domain. Required for faithful chromosome segregation during mitosis. Regulates autophagy by playing a role in the reduction of glucose production in an adiponectin- and insulin-dependent manner. This Homo sapiens (Human) protein is Microtubule cross-linking factor 2.